A 434-amino-acid chain; its full sequence is Serine hydroxymethyltransferase 1 (434 aa).

(6S)-5,6,7,8-tetrahydrofolate-binding positions include L136 and 140–142 (GHL). K245 is modified (N6-(pyridoxal phosphate)lysine).

Belongs to the SHMT family. In terms of assembly, homodimer. Pyridoxal 5'-phosphate serves as cofactor.

It localises to the cytoplasm. It carries out the reaction (6R)-5,10-methylene-5,6,7,8-tetrahydrofolate + glycine + H2O = (6S)-5,6,7,8-tetrahydrofolate + L-serine. Its pathway is one-carbon metabolism; tetrahydrofolate interconversion. It participates in amino-acid biosynthesis; glycine biosynthesis; glycine from L-serine: step 1/1. Catalyzes the reversible interconversion of serine and glycine with tetrahydrofolate (THF) serving as the one-carbon carrier. This reaction serves as the major source of one-carbon groups required for the biosynthesis of purines, thymidylate, methionine, and other important biomolecules. Also exhibits THF-independent aldolase activity toward beta-hydroxyamino acids, producing glycine and aldehydes, via a retro-aldol mechanism. The protein is Serine hydroxymethyltransferase 1 of Rhodospirillum rubrum (strain ATCC 11170 / ATH 1.1.1 / DSM 467 / LMG 4362 / NCIMB 8255 / S1).